The sequence spans 93 residues: Small ribosomal subunit protein uS19 (93 aa).

It belongs to the universal ribosomal protein uS19 family.

In terms of biological role, protein S19 forms a complex with S13 that binds strongly to the 16S ribosomal RNA. The chain is Small ribosomal subunit protein uS19 from Clavibacter michiganensis subsp. michiganensis (strain NCPPB 382).